The sequence spans 312 residues: Olfactory receptor 7D4 (312 aa).

The Extracellular portion of the chain corresponds to 1-25 (MEAENLTELSKFLLLGLSDDPELQP). N5 is a glycosylation site (N-linked (GlcNAc...) asparagine). The chain crosses the membrane as a helical span at residues 26–46 (VLFGLFLSMYLVTVLGNLLII). Residues 47–54 (LAVSSDSH) are Cytoplasmic-facing. A helical transmembrane segment spans residues 55 to 75 (LHTPMYFFLSNLSFVDICFIS). Residues 76–99 (TTVPKMLVSIQARSKDISYMGCLT) are Extracellular-facing. C97 and C189 form a disulfide bridge. A helical transmembrane segment spans residues 100-120 (QVYFLMMFAGMDTFLLAVMAY). At 121–139 (DRFVAICHPLHYTVIMNPC) the chain is on the cytoplasmic side. Residues 140 to 160 (LCGLLVLASWFIIFWFSLVHI) form a helical membrane-spanning segment. Topologically, residues 161–197 (LLMKRLTFSTGTEIPHFFCEPAQVLKVACSNTLLNNI) are extracellular. The chain crosses the membrane as a helical span at residues 198–217 (VLYVATALLGVFPVAGILFS). The Cytoplasmic segment spans residues 218 to 237 (YSQIVSSLMGMSSTKGKYKA). The chain crosses the membrane as a helical span at residues 238 to 258 (FSTCGSHLCVVSLFYGTGLGV). The Extracellular portion of the chain corresponds to 259-271 (YLSSAVTHSSQSS). A helical membrane pass occupies residues 272-292 (STASVMYAMVTPMLNPFIYSL). The Cytoplasmic portion of the chain corresponds to 293–312 (RNKDVKGALERLLSRADSCP).

The protein belongs to the G-protein coupled receptor 1 family. Nasal olfactory epithelium.

It is found in the cell membrane. Functionally, odorant receptor. Selectively activated by androstenone and the related odorous steroid androstadienone. The protein is Olfactory receptor 7D4 (OR7D4) of Homo sapiens (Human).